A 221-amino-acid polypeptide reads, in one-letter code: Ras-related protein Rab-27A (221 aa).

The residue at position 2 (S2) is an N-acetylserine. Position 2 is a phosphoserine (S2). 16–24 (GDSGVGKTS) is a binding site for GTP. An Effector region motif is present at residues 38–46 (FITTVGIDF). GTP contacts are provided by residues 74–78 (DTAGQ), 133–136 (NKSD), and 163–165 (SAA). C123 and C188 are disulfide-bonded. S-geranylgeranyl cysteine attachment occurs at residues C219 and C221. C221 is subject to Cysteine methyl ester.

The protein belongs to the small GTPase superfamily. Rab family. As to quaternary structure, binds SYTL1, SYTL2, SLAC2B, MYRIP, SYTL3, SYTL4, SYTL5 and MLPH. Interacts with UNC13D. Interacts with RPH3A and RPH3A. Does not interact with the BLOC-3 complex (heterodimer of HPS1 and HPS4). Interacts (GDP-bound form preferentially) with DENND10. In terms of tissue distribution, detected in melanocytes. Expressed abundantly in the stomach and is predominantly localized at the apical region of gastric-surface mucus cells. Also expressed in the thymus and lung.

It is found in the membrane. It localises to the melanosome. The protein resides in the late endosome. The protein localises to the lysosome. It catalyses the reaction GTP + H2O = GDP + phosphate + H(+). Regulated by guanine nucleotide exchange factors (GEFs) which promote the exchange of bound GDP for free GTP, GTPase activating proteins (GAPs) which increase the GTP hydrolysis activity, and GDP dissociation inhibitors which inhibit the dissociation of the nucleotide from the GTPase. Activated by GEFs such as DENND10. In terms of biological role, small GTPase which cycles between active GTP-bound and inactive GDP-bound states. In its active state, binds to a variety of effector proteins to regulate homeostasis of late endocytic pathway, including endosomal positioning, maturation and secretion. Plays a role in cytotoxic granule exocytosis in lymphocytes. Required for both granule maturation and granule docking and priming at the immunologic synapse. The chain is Ras-related protein Rab-27A (Rab27a) from Mus musculus (Mouse).